Reading from the N-terminus, the 433-residue chain is GTPase Obg (433 aa).

Residues 1-159 (MAITDYCECR…LNVSLEVKYL (159 aa)) form the Obg domain. The OBG-type G domain occupies 160 to 329 (ANVGIVGFPN…LLDRVFELYN (170 aa)). GTP is bound by residues 166–173 (GFPNSGKS), 191–195 (FTTLI), 212–215 (DIPG), 282–285 (NKID), and 310–312 (ISA). Mg(2+)-binding residues include Ser-173 and Thr-193. Positions 355–433 (TNENNNDPLN…FDGCEFVIND (79 aa)) constitute an OCT domain.

The protein belongs to the TRAFAC class OBG-HflX-like GTPase superfamily. OBG GTPase family. As to quaternary structure, monomer. Requires Mg(2+) as cofactor.

Its subcellular location is the cytoplasm. Functionally, an essential GTPase which binds GTP, GDP and possibly (p)ppGpp with moderate affinity, with high nucleotide exchange rates and a fairly low GTP hydrolysis rate. Plays a role in control of the cell cycle, stress response, ribosome biogenesis and in those bacteria that undergo differentiation, in morphogenesis control. This Mycoplasma genitalium (strain ATCC 33530 / DSM 19775 / NCTC 10195 / G37) (Mycoplasmoides genitalium) protein is GTPase Obg.